We begin with the raw amino-acid sequence, 377 residues long: Anhydro-N-acetylmuramic acid kinase (377 aa).

12 to 19 (GTSLDGID) is an ATP binding site.

Belongs to the anhydro-N-acetylmuramic acid kinase family.

It catalyses the reaction 1,6-anhydro-N-acetyl-beta-muramate + ATP + H2O = N-acetyl-D-muramate 6-phosphate + ADP + H(+). It functions in the pathway amino-sugar metabolism; 1,6-anhydro-N-acetylmuramate degradation. The protein operates within cell wall biogenesis; peptidoglycan recycling. In terms of biological role, catalyzes the specific phosphorylation of 1,6-anhydro-N-acetylmuramic acid (anhMurNAc) with the simultaneous cleavage of the 1,6-anhydro ring, generating MurNAc-6-P. Is required for the utilization of anhMurNAc either imported from the medium or derived from its own cell wall murein, and thus plays a role in cell wall recycling. In Methylorubrum populi (strain ATCC BAA-705 / NCIMB 13946 / BJ001) (Methylobacterium populi), this protein is Anhydro-N-acetylmuramic acid kinase.